The sequence spans 212 residues: DNA-directed RNA polymerase III subunit RPC8 (212 aa).

Serine 162 bears the Phosphoserine mark. Residues 166–184 (RELEERAQLENEIEGKNEE) show a composition bias toward basic and acidic residues. The interval 166-194 (RELEERAQLENEIEGKNEETPQNEKPPAY) is disordered.

The protein belongs to the eukaryotic RPB7/RPC8 RNA polymerase subunit family. Component of the RNA polymerase III (Pol III) complex consisting of 17 subunits. RPC25/RPC8 and RPC17/RPC9 form a Pol III subcomplex.

The protein resides in the nucleus. DNA-dependent RNA polymerase catalyzes the transcription of DNA into RNA using the four ribonucleoside triphosphates as substrates. Specific peripheric component of RNA polymerase III which synthesizes small RNAs, such as 5S rRNA and tRNA. The RPC25/RPC8-RPC17/RPC9 subcomplex may bind Pol III transcripts emerging from the adjacent exit pore during elongation. This Saccharomyces cerevisiae (strain ATCC 204508 / S288c) (Baker's yeast) protein is DNA-directed RNA polymerase III subunit RPC8 (RPC25).